Consider the following 300-residue polypeptide: GTPase Era (300 aa).

An Era-type G domain is found at 4–173 (KYGIVAIVGK…INTIKNYLHK (170 aa)). The tract at residues 12–19 (GKPNVGKS) is G1. GTP is bound at residue 12 to 19 (GKPNVGKS). Residues 38–42 (QTTRN) form a G2 region. Residues 59–62 (DTPG) are G3. GTP-binding positions include 59–63 (DTPGF) and 122–125 (SKAE). The interval 122–125 (SKAE) is G4. Positions 152 to 154 (ISA) are G5. Residues 204 to 282 (LNHEVPHGVG…SLTIFVKVEN (79 aa)) enclose the KH type-2 domain.

Belongs to the TRAFAC class TrmE-Era-EngA-EngB-Septin-like GTPase superfamily. Era GTPase family. Monomer.

It localises to the cytoplasm. The protein localises to the cell membrane. An essential GTPase that binds both GDP and GTP, with rapid nucleotide exchange. Plays a role in 16S rRNA processing and 30S ribosomal subunit biogenesis and possibly also in cell cycle regulation and energy metabolism. In Ureaplasma parvum serovar 3 (strain ATCC 27815 / 27 / NCTC 11736), this protein is GTPase Era.